A 129-amino-acid polypeptide reads, in one-letter code: Small ribosomal subunit protein uS11 (129 aa).

The protein belongs to the universal ribosomal protein uS11 family. In terms of assembly, part of the 30S ribosomal subunit. Interacts with proteins S7 and S18. Binds to IF-3.

Located on the platform of the 30S subunit, it bridges several disparate RNA helices of the 16S rRNA. Forms part of the Shine-Dalgarno cleft in the 70S ribosome. The sequence is that of Small ribosomal subunit protein uS11 from Caulobacter vibrioides (strain ATCC 19089 / CIP 103742 / CB 15) (Caulobacter crescentus).